Reading from the N-terminus, the 156-residue chain is Transcription antitermination protein NusB (156 aa).

Belongs to the NusB family.

Functionally, involved in transcription antitermination. Required for transcription of ribosomal RNA (rRNA) genes. Binds specifically to the boxA antiterminator sequence of the ribosomal RNA (rrn) operons. This chain is Transcription antitermination protein NusB, found in Rickettsia rickettsii (strain Iowa).